The chain runs to 397 residues: Serpin B10 (397 aa).

A Nuclear localization signal motif is present at residues 74 to 77 (KKRK).

This sequence belongs to the serpin family. Ov-serpin subfamily.

It localises to the nucleus. It is found in the cytoplasm. Its function is as follows. Protease inhibitor that may play a role in the regulation of protease activities during hematopoiesis and apoptosis induced by TNF. May regulate protease activities in the cytoplasm and in the nucleus. The chain is Serpin B10 (Serpinb10) from Mus musculus (Mouse).